The following is a 426-amino-acid chain: Enolase (426 aa).

Position 163 (Q163) interacts with (2R)-2-phosphoglycerate. E205 (proton donor) is an active-site residue. Residues D242, E285, and D312 each contribute to the Mg(2+) site. 4 residues coordinate (2R)-2-phosphoglycerate: K337, R366, S367, and K388. The Proton acceptor role is filled by K337.

Belongs to the enolase family. Requires Mg(2+) as cofactor.

It is found in the cytoplasm. The protein localises to the secreted. It localises to the cell surface. It carries out the reaction (2R)-2-phosphoglycerate = phosphoenolpyruvate + H2O. The protein operates within carbohydrate degradation; glycolysis; pyruvate from D-glyceraldehyde 3-phosphate: step 4/5. Its function is as follows. Catalyzes the reversible conversion of 2-phosphoglycerate (2-PG) into phosphoenolpyruvate (PEP). It is essential for the degradation of carbohydrates via glycolysis. This is Enolase from Nitrobacter winogradskyi (strain ATCC 25391 / DSM 10237 / CIP 104748 / NCIMB 11846 / Nb-255).